The chain runs to 330 residues: tRNA uridine(34) hydroxylase (330 aa).

The Rhodanese domain maps to 123-217 (SDPEVILVDT…YLEEVKQEES (95 aa)). Residue Cys-177 is the Cysteine persulfide intermediate of the active site.

It belongs to the TrhO family.

It catalyses the reaction uridine(34) in tRNA + AH2 + O2 = 5-hydroxyuridine(34) in tRNA + A + H2O. Functionally, catalyzes oxygen-dependent 5-hydroxyuridine (ho5U) modification at position 34 in tRNAs. This Shewanella sp. (strain MR-4) protein is tRNA uridine(34) hydroxylase.